The chain runs to 395 residues: Elongation factor Tu (395 aa).

The region spanning 10–204 is the tr-type G domain; that stretch reads KPHVNIGTIG…AVDEYIPTPQ (195 aa). Positions 19–26 are G1; it reads GHVDHGKT. 19 to 26 is a binding site for GTP; sequence GHVDHGKT. T26 is a binding site for Mg(2+). Residues 60–64 are G2; it reads GITIS. A G3 region spans residues 81-84; it reads DCPG. Residues 81-85 and 136-139 each bind GTP; these read DCPGH and NKCD. Residues 136-139 form a G4 region; it reads NKCD. Residues 174–176 form a G5 region; it reads SAL.

It belongs to the TRAFAC class translation factor GTPase superfamily. Classic translation factor GTPase family. EF-Tu/EF-1A subfamily. In terms of assembly, monomer.

Its subcellular location is the cytoplasm. It carries out the reaction GTP + H2O = GDP + phosphate + H(+). Functionally, GTP hydrolase that promotes the GTP-dependent binding of aminoacyl-tRNA to the A-site of ribosomes during protein biosynthesis. This chain is Elongation factor Tu, found in Geobacillus kaustophilus (strain HTA426).